A 223-amino-acid chain; its full sequence is Putative 3-methyladenine DNA glycosylase (223 aa).

Belongs to the DNA glycosylase MPG family.

The sequence is that of Putative 3-methyladenine DNA glycosylase from Rickettsia typhi (strain ATCC VR-144 / Wilmington).